Here is a 216-residue protein sequence, read N- to C-terminus: Ribonuclease HII (216 aa).

Positions 28–216 constitute an RNase H type-2 domain; it reads DIVCGVDEAG…PVRAALDLIR (189 aa). Residues aspartate 34, glutamate 35, and aspartate 126 each coordinate a divalent metal cation.

It belongs to the RNase HII family. Mn(2+) is required as a cofactor. Mg(2+) serves as cofactor.

It localises to the cytoplasm. It carries out the reaction Endonucleolytic cleavage to 5'-phosphomonoester.. Functionally, endonuclease that specifically degrades the RNA of RNA-DNA hybrids. The polypeptide is Ribonuclease HII (Burkholderia vietnamiensis (strain G4 / LMG 22486) (Burkholderia cepacia (strain R1808))).